The sequence spans 552 residues: 4-coumarate--CoA ligase-like 3 (552 aa).

ATP contacts are provided by serine 207, serine 208, glycine 209, threonine 210, threonine 211, and lysine 215. Phenylalanine 252 contacts (E)-4-coumaroyl-AMP. Arginine 273 contributes to the CoA binding site. Positions 275–346 (GLDDMMQAVE…EKYPTVNIFQ (72 aa)) are SBD1. Positions 324, 346, 347, and 351 each coordinate (E)-4-coumaroyl-AMP. Residues glutamine 346, glycine 347, threonine 351, aspartate 432, and arginine 447 each coordinate ATP. Positions 347 to 411 (GYALTESHGS…LKGPSISKGY (65 aa)) are SBD2. Residues lysine 449 and lysine 453 each coordinate (E)-4-coumaroyl-AMP. Residues lysine 455 and glycine 456 each coordinate CoA. ATP is bound at residue lysine 538. Residues 550 to 552 (SKL) carry the Microbody targeting signal motif.

It belongs to the ATP-dependent AMP-binding enzyme family. The cofactor is Mg(2+).

Its subcellular location is the peroxisome. It carries out the reaction (E)-4-coumarate + ATP + CoA = (E)-4-coumaroyl-CoA + AMP + diphosphate. The catalysed reaction is (E)-4-coumarate + ATP + H(+) = (E)-4-coumaroyl-AMP + diphosphate. It catalyses the reaction (E)-4-coumaroyl-AMP + CoA = (E)-4-coumaroyl-CoA + AMP + H(+). Carboxylate--CoA ligase that may use 4-coumarate as substrate. Follows a two-step reaction mechanism, wherein the carboxylate substrate first undergoes adenylation by ATP, followed by a thioesterification in the presence of CoA to yield the final CoA thioester. This Arabidopsis thaliana (Mouse-ear cress) protein is 4-coumarate--CoA ligase-like 3.